The sequence spans 428 residues: D-amino acid dehydrogenase (428 aa).

Position 3-17 (3-17) interacts with FAD; the sequence is VVILGSGVVGVASAY.

It belongs to the DadA oxidoreductase family. It depends on FAD as a cofactor.

The enzyme catalyses a D-alpha-amino acid + A + H2O = a 2-oxocarboxylate + AH2 + NH4(+). The protein operates within amino-acid degradation; D-alanine degradation; NH(3) and pyruvate from D-alanine: step 1/1. Oxidative deamination of D-amino acids. This chain is D-amino acid dehydrogenase, found in Burkholderia pseudomallei (strain 1106a).